The following is a 156-amino-acid chain: Small ribosomal subunit protein uS7 (156 aa).

Belongs to the universal ribosomal protein uS7 family. As to quaternary structure, part of the 30S ribosomal subunit. Contacts proteins S9 and S11.

Its function is as follows. One of the primary rRNA binding proteins, it binds directly to 16S rRNA where it nucleates assembly of the head domain of the 30S subunit. Is located at the subunit interface close to the decoding center, probably blocks exit of the E-site tRNA. This is Small ribosomal subunit protein uS7 from Streptococcus suis (strain 98HAH33).